Reading from the N-terminus, the 114-residue chain is U5-lycotoxin-Ls1a (114 aa).

A signal peptide spans 1 to 20 (MKYQILFGVVFLTLLSYCYS). Residues 21-45 (EIEDEFENFVDEEMVEADDPFSLAR) constitute a propeptide that is removed on maturation. 3 cysteine pairs are disulfide-bonded: Cys-51–Cys-66, Cys-65–Cys-93, and Cys-77–Cys-91.

This sequence belongs to the neurotoxin 19 (CSTX) family. 04 (U1-Lctx) subfamily. Expressed by the venom gland.

It localises to the secreted. The polypeptide is U5-lycotoxin-Ls1a (Lycosa singoriensis (Wolf spider)).